The chain runs to 390 residues: ATP-sensitive inward rectifier potassium channel 11 (390 aa).

The Cytoplasmic portion of the chain corresponds to 1–65; the sequence is MLSRKGIIPE…LQDVFTTLVD (65 aa). ATP contacts are provided by Asn48 and Arg50. Residues 66–92 traverse the membrane as a helical segment; sequence LKWPHTLLIFTMSFLCSWLLFAMVWWL. Over 93–116 the chain is Extracellular; sequence IAFAHGDLAPGEGTNVPCVTSIHS. A disulfide bridge connects residues Cys110 and Cys142. Residues 117–133 constitute an intramembrane region (discontinuously helical; Pore-forming); the sequence is FSSAFLFSIEVQVTIGF. Residues Thr130 and Phe133 each contribute to the K(+) site. Positions 130–135 match the Selectivity filter motif; sequence TIGFGG. The Extracellular portion of the chain corresponds to 134–142; sequence GGRMVTEEC. A helical transmembrane segment spans residues 143–171; that stretch reads PLAILILIVQNIVGLMINAIMLGCIFMKT. At 172 to 390 the chain is on the cytoplasmic side; the sequence is AQAHRRAETL…KFSISPDSLS (219 aa). An a 1,2-diacyl-sn-glycero-3-phospho-(1D-myo-inositol-4,5-bisphosphate)-binding site is contributed by Arg176. Tyr330 is an ATP binding site. At Thr341 the chain carries Phosphothreonine; by MAPK1. Ser385 carries the post-translational modification Phosphoserine; by MAPK1.

It belongs to the inward rectifier-type potassium channel (TC 1.A.2.1) family. KCNJ11 subfamily. Homotetramer; the homotetramer binds four ATP molecules (one ATP per subunit). Forms an heterooctamer with ABCC8/SUR1; one KCNJ11 homotetramer interacts with four ABCC8/SUR1 molecules. Interacts with ABCC9/SUR2. In terms of processing, phosphorylation by MAPK1 results in changes in channel gating that destabilize the closed states and reduce the ATP sensitivity.

It localises to the membrane. It catalyses the reaction K(+)(in) = K(+)(out). KATP channels are regulated by cytoplasmic ATP/ADP ratios; ATP inhibits the channel by closing the pore, while ADP activates the channel. Activated by phosphatidylinositol 4,5-biphosphate (PtdIns(4,5)P2). Its function is as follows. Inward rectifier potassium channel that forms the pore of ATP-sensitive potassium channels (KATP), regulating potassium permeability as a function of cytoplasmic ATP and ADP concentrations in many different cells. Inward rectifier potassium channels are characterized by a greater tendency to allow potassium to flow into the cell rather than out of it. Their voltage dependence is regulated by the concentration of extracellular potassium; as external potassium is raised, the voltage range of the channel opening shifts to more positive voltages. The inward rectification is mainly due to the blockage of outward current by internal magnesium. Can be blocked by extracellular barium. In pancreatic cells, it forms KATP channels with ABCC8/SUR1. Can form cardiac and smooth muscle-type KATP channels with ABCC9. In Mus musculus (Mouse), this protein is ATP-sensitive inward rectifier potassium channel 11 (Kcnj11).